The sequence spans 360 residues: Abhydrolase domain-containing protein lid-1 (360 aa).

Residues 73-203 (AIVFIPGLGA…MSFLGGVAGY (131 aa)) form the AB hydrolase-1 domain.

The protein belongs to the peptidase S33 family. ABHD4/ABHD5 subfamily. As to quaternary structure, interacts with atgl-1.

Its subcellular location is the lipid droplet. In terms of biological role, acts coordinately with atgl-1 within the lipolytic cascade to distribute stored energy to tissues during nutritional deprivation. This Caenorhabditis elegans protein is Abhydrolase domain-containing protein lid-1.